The primary structure comprises 161 residues: Crossover junction endodeoxyribonuclease RuvC (161 aa).

Active-site residues include aspartate 9, glutamate 69, and histidine 144. Mg(2+) is bound by residues aspartate 9, glutamate 69, and histidine 144.

Belongs to the RuvC family. As to quaternary structure, homodimer which binds Holliday junction (HJ) DNA. The HJ becomes 2-fold symmetrical on binding to RuvC with unstacked arms; it has a different conformation from HJ DNA in complex with RuvA. In the full resolvosome a probable DNA-RuvA(4)-RuvB(12)-RuvC(2) complex forms which resolves the HJ. Mg(2+) serves as cofactor.

Its subcellular location is the cytoplasm. It carries out the reaction Endonucleolytic cleavage at a junction such as a reciprocal single-stranded crossover between two homologous DNA duplexes (Holliday junction).. Functionally, the RuvA-RuvB-RuvC complex processes Holliday junction (HJ) DNA during genetic recombination and DNA repair. Endonuclease that resolves HJ intermediates. Cleaves cruciform DNA by making single-stranded nicks across the HJ at symmetrical positions within the homologous arms, yielding a 5'-phosphate and a 3'-hydroxyl group; requires a central core of homology in the junction. The consensus cleavage sequence is 5'-(A/T)TT(C/G)-3'. Cleavage occurs on the 3'-side of the TT dinucleotide at the point of strand exchange. HJ branch migration catalyzed by RuvA-RuvB allows RuvC to scan DNA until it finds its consensus sequence, where it cleaves and resolves the cruciform DNA. The sequence is that of Crossover junction endodeoxyribonuclease RuvC from Borrelia turicatae (strain 91E135).